Reading from the N-terminus, the 117-residue chain is Large ribosomal subunit protein uL18 (117 aa).

Belongs to the universal ribosomal protein uL18 family. As to quaternary structure, part of the 50S ribosomal subunit; part of the 5S rRNA/L5/L18/L25 subcomplex. Contacts the 5S and 23S rRNAs.

This is one of the proteins that bind and probably mediate the attachment of the 5S RNA into the large ribosomal subunit, where it forms part of the central protuberance. The sequence is that of Large ribosomal subunit protein uL18 from Pasteurella multocida (strain Pm70).